A 345-amino-acid polypeptide reads, in one-letter code: Methylthioribose-1-phosphate isomerase (345 aa).

Substrate contacts are provided by residues 44–46 (RGA), arginine 86, and glutamine 194. Residue aspartate 235 is the Proton donor of the active site. 245 to 246 (NK) is a binding site for substrate.

The protein belongs to the eIF-2B alpha/beta/delta subunits family. MtnA subfamily.

It catalyses the reaction 5-(methylsulfanyl)-alpha-D-ribose 1-phosphate = 5-(methylsulfanyl)-D-ribulose 1-phosphate. The protein operates within amino-acid biosynthesis; L-methionine biosynthesis via salvage pathway; L-methionine from S-methyl-5-thio-alpha-D-ribose 1-phosphate: step 1/6. In terms of biological role, catalyzes the interconversion of methylthioribose-1-phosphate (MTR-1-P) into methylthioribulose-1-phosphate (MTRu-1-P). The sequence is that of Methylthioribose-1-phosphate isomerase from Desulfitobacterium hafniense (strain Y51).